Here is a 141-residue protein sequence, read N- to C-terminus: Auxin-responsive protein SAUR61 (141 aa).

The protein belongs to the ARG7 family.

It is found in the cell membrane. In terms of biological role, may promote auxin-stimulated organ elongation, such as hypocotyls, stamen filaments and petals. The sequence is that of Auxin-responsive protein SAUR61 from Arabidopsis thaliana (Mouse-ear cress).